Reading from the N-terminus, the 1200-residue chain is Metabotropic glycine receptor (1200 aa).

The signal sequence occupies residues 1–24 (MGAMAYSLLFCLLLAHLGLGEVGA). A disordered region spans residues 25 to 62 (SLDPPGRPDSPRERTPRGKQHGQQLPRASAPDPSIPWS). Topologically, residues 25-417 (SLDPPGRPDS…CFVQEDKYLR (393 aa)) are extracellular. The tract at residues 85–281 (YLYTGDFHQL…CENGSYKPGW (197 aa)) is cache-like region. Residues Asn-98 and Asn-143 are each glycosylated (N-linked (GlcNAc...) asparagine). Cys-99 and Cys-272 are oxidised to a cystine. Residues Ser-172 and Arg-173 each coordinate glycine. Asn-215 is a glycosylation site (N-linked (GlcNAc...) asparagine). The segment at 234–253 (LHRRGSNQGPRGLGHSWRRR) is disordered. A glycine-binding site is contributed by Glu-271. The N-linked (GlcNAc...) asparagine glycan is linked to Asn-274. Asp-307 serves as a coordination point for glycine. An N-linked (GlcNAc...) asparagine glycan is attached at Asn-333. Residues 418 to 439 (LAIISFQALCMLLDFVSMLVVY) traverse the membrane as a helical segment. The Cytoplasmic portion of the chain corresponds to 440–451 (HFRKAKSIRASG). The chain crosses the membrane as a helical span at residues 452 to 474 (LILLETILFGSLLLYFPVVILYF). Residues 475–478 (EPST) are Extracellular-facing. A helical membrane pass occupies residues 479-501 (FRCILLRWARLLGFATVYGTVTL). Cysteines 481 and 573 form a disulfide. Over 502 to 525 (KLHRVLKVFLSRTAQRIPYMTGGR) the chain is Cytoplasmic. A helical transmembrane segment spans residues 526–547 (VMRMLAVIVLVVFWFLVGWTSS). Residues 548–576 (MCQNLERDILLVGQGQTSDHLTFNMCLID) lie on the Extracellular side of the membrane. The helical transmembrane segment at 577 to 597 (RWDYMTAVAEFLFLLWGIYLC) threads the bilayer. The Cytoplasmic segment spans residues 598-611 (YAVRTVPSAFHEPR). The helical transmembrane segment at 612 to 633 (YMAVAVHNELIITAIFHTIRFV) threads the bilayer. The Extracellular portion of the chain corresponds to 634-642 (LASRLQPDW). A helical transmembrane segment spans residues 643-664 (MLMLYFAHAHLTVTVTIGLLLI). Over 665 to 1200 (PKFSHSSNNP…SANKIPGPQK (536 aa)) the chain is Cytoplasmic. Residues Ser-694, Ser-705, and Ser-708 each carry the phosphoserine modification. Residues 757-875 (RITEIPETVS…EAESTESVPL (119 aa)) are disordered. Composition is skewed to basic and acidic residues over residues 769–781 (CSKEDKEGTDHSA) and 819–828 (STYDHVRDQT). A Glycyl lysine isopeptide (Lys-Gly) (interchain with G-Cter in ubiquitin) cross-link involves residue Lys-774. Residues 845–856 (ENSTLESLSSKK) are compositionally biased toward low complexity. Phosphoserine is present on residues Ser-865 and Ser-944. The segment at 947 to 988 (DNVETIPNSGHMEEPRKPQKSGIMKQQRVSLPTANPDVSSGI) is disordered. Polar residues predominate over residues 973–988 (QRVSLPTANPDVSSGI). Positions 1000–1004 (VCPWE) match the VCPWE motif 1 motif. The residue at position 1059 (Ser-1059) is a Phosphoserine. Residues 1065-1069 (VCPWE) carry the VCPWE motif 2 motif. At Ser-1074 the chain carries Phosphoserine. Residues 1130–1160 (QMGDQEKQTSSSVDIIPGSCNSSNNSHQPLT) are disordered. The short motif at 1165–1169 (VCPWE) is the VCPWE motif 3 element. A disordered region spans residues 1177–1200 (NAERSVTLPASSALSANKIPGPQK). The segment covering 1178 to 1191 (AERSVTLPASSALS) has biased composition (polar residues).

The protein belongs to the G-protein coupled receptor 3 family. In terms of assembly, homodimer. Associates with the RGS7-GNB5 complex, promoting its localization to the cell membrane and regulating its GTPase activator activity. Interacts (via VCPWE motifs) with GNAO1. Interacts with GPC4. Interacts with EGFLAM. Highly expressed in brain. Expressed in several brain regions including the cerebral cortex, hippocampus, cerebellum and caudate putamen. Only expressed in neurons, and not in microglia, oligodendrocytes or astrocytes. Expressed in the visual center of the cerebral cortex. Also expressed in the eye, including photoreceptors, ganglion cells and trabecular meshwork.

The protein resides in the cell membrane. It localises to the postsynaptic cell membrane. It is found in the presynaptic cell membrane. Its subcellular location is the nucleus. Metabotropic receptor for glycine that controls synapse formation and function in the brain. Acts as an atypical G-protein coupled receptor that recruits and regulates the RGS7-GNB5 complex instead of activating G proteins. In absence of glycine ligand, promotes the GTPase activator activity of RGS7, increasing the GTPase activity of G protein alpha subunits, thereby driving them into their inactive GDP-bound form. Glycine-binding changes the conformation of the intracellular surface, inhibiting the GTPase activator activity of the RGS7-GNB5 complex, promoting G protein alpha subunits into their active GTP-bound form and regulating cAMP levels. Also able to bind taurine, a compound closely related to glycine, but with a two-fold lower affinity. Glycine receptor-dependent regulation of cAMP controls key ion channels, kinases and neurotrophic factors involved in neuronal excitability and synaptic transmission. Plays a pivotal role in regulating mood and cognition via its ability to regulate neuronal excitability in L2/L3 pyramidal neurons of the prefrontal cortex. Also involved in spatial learning by regulating hippocampal CA1 neuronal excitability. Acts as a synaptic organizer in the hippocampus, required for proper mossy fiber-CA3 neurocircuitry establishment, structure and function: induces presynaptic differentiation in contacting axons via its interaction with GPC4. In addition to glycine, may also act as a receptor for osteocalcin (Bglap or Bglap2) hormone: osteocalcin-binding initiates a signaling response that prevents neuronal apoptosis in the hippocampus and regulates the synthesis of neurotransmitters. The protein is Metabotropic glycine receptor of Mus musculus (Mouse).